The following is a 246-amino-acid chain: Large ribosomal subunit protein uL3 (246 aa).

N5-methylglutamine is present on Q151.

This sequence belongs to the universal ribosomal protein uL3 family. In terms of assembly, part of the 50S ribosomal subunit. Forms a cluster with proteins L14 and L19. In terms of processing, methylated by PrmB.

Functionally, one of the primary rRNA binding proteins, it binds directly near the 3'-end of the 23S rRNA, where it nucleates assembly of the 50S subunit. This chain is Large ribosomal subunit protein uL3, found in Bartonella bacilliformis (strain ATCC 35685 / KC583 / Herrer 020/F12,63).